Here is a 34-residue protein sequence, read N- to C-terminus: U1-poneritoxin-Na2a (34 aa).

Expressed by the venom gland.

The protein localises to the secreted. Its function is as follows. May have antimicrobial properties, like most ant linear peptides. This is U1-poneritoxin-Na2a from Neoponera apicalis (Ant).